Here is a 1551-residue protein sequence, read N- to C-terminus: Serine/threonine-protein kinase MRCK gamma (1551 aa).

Positions 71–337 constitute a Protein kinase domain; sequence FEILKVIGRG…LDDFRKHPFF (267 aa). ATP contacts are provided by residues 77-85 and lysine 100; that span reads IGRGAFGEV. Aspartate 195 (proton acceptor) is an active-site residue. Residues serine 216 and serine 228 each carry the phosphoserine; by autocatalysis modification. Threonine 234 is subject to Phosphothreonine; by autocatalysis. Residues 338-408 enclose the AGC-kinase C-terminal domain; it reads EGVDWERLAT…TSGSPFDVQS (71 aa). Coiled coils occupy residues 442-675 and 729-801; these read QPQE…TESN and KARR…QARG. A disordered region spans residues 578–605; that stretch reads QESSQAKTVHAAPETNGIGSPEGQSQEA. Positions 820-886 are disordered; it reads TEKDSAKDPG…SHTLRPRSFP (67 aa). Basic and acidic residues predominate over residues 839–849; sequence AEAELRPEGRR. The Phorbol-ester/DAG-type zinc-finger motif lies at 877–926; the sequence is SHTLRPRSFPSPTKCLRCTSLMLGLGRQGLGCDTCGYFCHSACASQAPPC. The PH domain occupies 946-1065; that stretch reads GTAYEGFLSV…WLQVLGELQR (120 aa). The CNH domain occupies 1091 to 1365; that stretch reads LPHALCAAVI…RPLNPEGSLF (275 aa). Positions 1436–1449 constitute a CRIB domain; sequence ISPPTNFNHLVHVG. The interval 1441–1551 is disordered; sequence NFNHLVHVGP…PPDPESESSP (111 aa). A compositionally biased stretch (basic and acidic residues) spans 1455 to 1468; sequence PNTRDGTRAQEQKS. A Phosphoserine modification is found at serine 1481. Over residues 1511-1527 the composition is skewed to polar residues; the sequence is TSLSSESVSCPQGSLSP.

It belongs to the protein kinase superfamily. AGC Ser/Thr protein kinase family. DMPK subfamily. Homodimer and homotetramer via the coiled coil regions. Interacts tightly with GTP-bound but not GDP-bound CDC42. It depends on Mg(2+) as a cofactor.

The protein resides in the cytoplasm. It catalyses the reaction L-seryl-[protein] + ATP = O-phospho-L-seryl-[protein] + ADP + H(+). The enzyme catalyses L-threonyl-[protein] + ATP = O-phospho-L-threonyl-[protein] + ADP + H(+). Its activity is regulated as follows. Maintained in an inactive, closed conformation by an interaction between the kinase domain and the negative autoregulatory C-terminal coiled-coil region. Agonist binding to the phorbol ester binding site disrupts this, releasing the kinase domain to allow N-terminus-mediated dimerization and kinase activation by transautophosphorylation. Functionally, may act as a downstream effector of CDC42 in cytoskeletal reorganization. Contributes to the actomyosin contractility required for cell invasion, through the regulation of MYPT1 and thus MLC2 phosphorylation. The chain is Serine/threonine-protein kinase MRCK gamma from Mus musculus (Mouse).